The primary structure comprises 302 residues: Quinolinate synthase (302 aa).

Residues His-24 and Ser-41 each coordinate iminosuccinate. Position 86 (Cys-86) interacts with [4Fe-4S] cluster. Iminosuccinate is bound by residues 112-114 (YVN) and Ser-129. Cys-173 lines the [4Fe-4S] cluster pocket. Iminosuccinate is bound by residues 199 to 201 (HPE) and Thr-216. Residue Cys-259 coordinates [4Fe-4S] cluster.

It belongs to the quinolinate synthase family. Type 2 subfamily. [4Fe-4S] cluster serves as cofactor.

Its subcellular location is the cytoplasm. It catalyses the reaction iminosuccinate + dihydroxyacetone phosphate = quinolinate + phosphate + 2 H2O + H(+). The protein operates within cofactor biosynthesis; NAD(+) biosynthesis; quinolinate from iminoaspartate: step 1/1. Its function is as follows. Catalyzes the condensation of iminoaspartate with dihydroxyacetone phosphate to form quinolinate. This Thermococcus kodakarensis (strain ATCC BAA-918 / JCM 12380 / KOD1) (Pyrococcus kodakaraensis (strain KOD1)) protein is Quinolinate synthase.